A 332-amino-acid polypeptide reads, in one-letter code: MKRLFSASLLAAGLALGGAAHAAQPLLNVSYDVMRDFYKEYNPAFQKYWKAEKGENITIQMSHGGSSKQARSVIDGLPADVITMNQATDIDALADNGGLVPKDWATRLPNNSAPFTSATVFIVRKGNPKALKDWPDLLKDGVQVVVPNPKTSGNGRYTYLSAWGYVLKNGGDENKAKEFVGKLFKQVPVLDTGGRAATTTFMQNQIGDVLVTFENEAEMIAREFGRGGFEVVYPSVSAEAEPPVAVVDKVVEKKGSRAQAEAYLKYLWSDEGQTIAANNYLRPRNPEILAKFADRFPKVDFFSVEKTFGDWRSVQKTHFIDGGVFDQIYSPN.

Positions 1-22 (MKRLFSASLLAAGLALGGAAHA) are cleaved as a signal peptide.

It belongs to the prokaryotic sulfate-binding protein family.

Its subcellular location is the periplasm. Binds thiosulfate specifically and with high affinity. Has no detectable affinity for sulfate. This is Thiosulfate-binding protein from Pseudomonas aeruginosa (strain ATCC 15692 / DSM 22644 / CIP 104116 / JCM 14847 / LMG 12228 / 1C / PRS 101 / PAO1).